We begin with the raw amino-acid sequence, 392 residues long: Queuine tRNA-ribosyltransferase (392 aa).

Aspartate 93 functions as the Proton acceptor in the catalytic mechanism. Substrate is bound by residues 93–97 (DSGGY), aspartate 147, glutamine 189, and glycine 216. Positions 247 to 253 (GVGAPED) are RNA binding. Catalysis depends on aspartate 266, which acts as the Nucleophile. Positions 271-275 (TRVAR) are RNA binding; important for wobble base 34 recognition. The Zn(2+) site is built by cysteine 304, cysteine 306, cysteine 309, and histidine 335.

Belongs to the queuine tRNA-ribosyltransferase family. In terms of assembly, homodimer. Within each dimer, one monomer is responsible for RNA recognition and catalysis, while the other monomer binds to the replacement base PreQ1. Requires Zn(2+) as cofactor.

The enzyme catalyses 7-aminomethyl-7-carbaguanine + guanosine(34) in tRNA = 7-aminomethyl-7-carbaguanosine(34) in tRNA + guanine. The protein operates within tRNA modification; tRNA-queuosine biosynthesis. In terms of biological role, catalyzes the base-exchange of a guanine (G) residue with the queuine precursor 7-aminomethyl-7-deazaguanine (PreQ1) at position 34 (anticodon wobble position) in tRNAs with GU(N) anticodons (tRNA-Asp, -Asn, -His and -Tyr). Catalysis occurs through a double-displacement mechanism. The nucleophile active site attacks the C1' of nucleotide 34 to detach the guanine base from the RNA, forming a covalent enzyme-RNA intermediate. The proton acceptor active site deprotonates the incoming PreQ1, allowing a nucleophilic attack on the C1' of the ribose to form the product. After dissociation, two additional enzymatic reactions on the tRNA convert PreQ1 to queuine (Q), resulting in the hypermodified nucleoside queuosine (7-(((4,5-cis-dihydroxy-2-cyclopenten-1-yl)amino)methyl)-7-deazaguanosine). The sequence is that of Queuine tRNA-ribosyltransferase from Dehalococcoides mccartyi (strain CBDB1).